A 555-amino-acid polypeptide reads, in one-letter code: MEFTEQLFMITGCPERHNDKPIGRGFNIISMKSFKKGKGFILFEAKHIPKNYYGYYLRPVILPTNNREFAFQKSPWGYYTNMVSLDEIYELANPQTFYMLEKYGLDLGEMSAESRALNYSKYYADDYTNSFAHKYFLSRKNMYEDGHCQDIDCEPNQSEDTDCESNRSENSEDIGYVIDFNNIYKLKNVTHTPYLGMNLPDRLFIITVYRGVFGTKLISQGLNCFSKQEFNRQKGFIVLNAKNIIKDCYGYFIHSVILPTSHPEFILEDRHTYYYTNMVIIDKTYELSDPETFRILGKYGLDLTVYSAEQRAKNYETSRPMNVLKSTSNHHMPSCDFSHVDSTYNRTSTTSVWTTKNIPLTIDTKVNNIHQFIQKDEFKSAQKLLEDDIVFKKVVDTAIKSNNQKTIKYLIDQQQFDINEAIKLALEENKLDIFNMLRLFNFDKVRCLATASILGYLEIVDKMMENDFEKINGDLVNIVLRNAAEGGKIDIVWYISEKFIEFVTKIDIEVAETIVKQRIQHICTFSDDNDIDISVEQDMLELFENMKMIVVNSKF.

4 ANK repeats span residues 364 to 389 (TKVN…EDDI), 390 to 420 (VFKK…DINE), 422 to 447 (IKLA…KVRC), and 455 to 488 (GYLE…EGGK).

The chain is Putative ankyrin repeat protein L283 from Acanthamoeba polyphaga mimivirus (APMV).